A 340-amino-acid chain; its full sequence is MGSVSKTVISARGASPDDEQNGTKNGISNGSEWAKCIFLFFFLFIAGMSNWAVLAYTHDYVPRESLPDIVFSLVSEQRWASSLGDFCVALCIVMLGALLVIHQHRGTILKRVVFCAGTLYAMRSVTLAATQLPSGYTDNQGRCRDQVESEAGVFFGRLFEQTIRIGFQSKDQMLCGDLLFSGHTLVMVTCSLAVAYYLPKSIKPLQWVSHVACLIGMICMTISRTHYTIDVVIAYWLSNMVFRMYHAYCEVDMCMERRKSILYSWWPCRIVDWLEQDIVPGRLENRCQLPWRRSTPRGQERGGASAESSDSSVTMCDNITTSHHQKHVSISSSSTYPLPC.

The segment at Met-1–Asn-25 is disordered. 4 helical membrane-spanning segments follow: residues Cys-36–Tyr-56, Ser-81–Ile-101, Leu-178–Leu-198, and Ile-202–Ile-222. His-183 is an active-site residue. Residues Ser-223–Cys-340 lie on the Cytoplasmic side of the membrane. Active-site residues include His-226 and Asp-230. Residues Ser-294–Val-313 are disordered.

This sequence belongs to the sphingomyelin synthase family.

The protein resides in the membrane. The enzyme catalyses an N-acyl-sphingoid base + a 1,2-diacyl-sn-glycero-3-phosphocholine = an N-(acyl)-sphingosylphosphocholine + a 1,2-diacyl-sn-glycerol. It carries out the reaction an N-acylsphing-4-enine + a 1,2-diacyl-sn-glycero-3-phosphocholine = a sphingomyelin + a 1,2-diacyl-sn-glycerol. It catalyses the reaction an N-acyl-15-methylhexadecasphing-4-enine + a 1,2-diacyl-sn-glycero-3-phosphocholine = an N-acyl-15-methylhexadecasphing-4-enine-1-phosphocholine + a 1,2-diacyl-sn-glycerol. The protein operates within lipid metabolism; sphingolipid metabolism. In terms of biological role, bidirectional lipid cholinephosphotransferase capable of converting phosphatidylcholine (PC) and ceramide to sphingomyelin (SM) and diacylglycerol (DAG) and vice versa. Direction is dependent on the relative concentrations of DAG and ceramide as phosphocholine acceptors. Directly and specifically recognizes the choline head group on the substrate. Also requires two fatty chains on the choline-P donor molecule in order to be recognized efficiently as a substrate. Does not function strictly as a SM synthase. C.elegans contains specific sphingoid bases, which are unique or different in structure compared to the sphingoid bases found in other animals. Two examples of these distinctive compounds are: 15-methylhexadecasphinganine and 15-methylhexadecasphing-4-enine. The sequence is that of Putative phosphatidylcholine:ceramide cholinephosphotransferase 3 (sms-3) from Caenorhabditis elegans.